Here is a 490-residue protein sequence, read N- to C-terminus: Polyamine transporter RMV1 (490 aa).

The segment covering 1-21 (MTELSSPNLDSASQKPRISTE) has biased composition (polar residues). A disordered region spans residues 1–38 (MTELSSPNLDSASQKPRISTENPPPPPPHISIGVTTGD). 12 consecutive transmembrane segments (helical) span residues 53 to 73 (ITVL…PFGI), 83 to 103 (LLAI…EALI), 116 to 136 (GYVV…QGWV), 160 to 180 (IPIL…TVAL), 188 to 208 (LSIV…PFVV), 231 to 248 (GVNW…LNYW), 273 to 293 (LLLV…AIAL), 303 to 323 (FADI…QAAA), 363 to 383 (TPWV…WLSF), 386 to 406 (IVAA…ITFV), 425 to 445 (VLGS…IMAF), and 448 to 468 (LKVA…QPCL).

Belongs to the amino acid-polyamine-organocation (APC) superfamily. Polyamine:cation symporter (PHS) (TC 2.A.3.12) family.

The protein resides in the cell membrane. In terms of biological role, cell membrane polyamine/proton symporter involved in the polyamine uptake in cells. Possesses high affinity for spermine and spermidine and lower affinity for putrescine. Transports paraquat, a polyamine analog, and thus confers sensitivity to this chemical which is used as a herbicide. This is Polyamine transporter RMV1 (RMV1) from Arabidopsis thaliana (Mouse-ear cress).